The sequence spans 96 residues: Putative defensin-like protein 263 (96 aa).

Residues 1-26 (MEKTSLKLVFLFSLTVIALCLSLSAA) form the signal peptide. Intrachain disulfides connect Cys-48–Cys-96, Cys-67–Cys-86, Cys-73–Cys-91, and Cys-77–Cys-93.

Belongs to the DEFL family.

Its subcellular location is the secreted. The polypeptide is Putative defensin-like protein 263 (Arabidopsis thaliana (Mouse-ear cress)).